The following is a 344-amino-acid chain: Lipase chaperone (344 aa).

A helical membrane pass occupies residues 14–34 (AAIYGVVGLAAIAGVAMWSGA).

This sequence belongs to the lipase chaperone family.

It is found in the cell inner membrane. May be involved in the folding of the extracellular lipase during its passage through the periplasm. This Burkholderia cenocepacia (strain HI2424) protein is Lipase chaperone.